Reading from the N-terminus, the 485-residue chain is Protein nucleotidyltransferase YdiU (485 aa).

ATP contacts are provided by G85, G87, R88, K108, D120, G121, R171, and R178. D249 serves as the catalytic Proton acceptor. Mg(2+)-binding residues include N250 and D259. Position 259 (D259) interacts with ATP. The interval 462-485 (LPTTPNYQDPPADGDRSYQTFCGT) is disordered.

This sequence belongs to the SELO family. It depends on Mg(2+) as a cofactor. Requires Mn(2+) as cofactor.

It catalyses the reaction L-seryl-[protein] + ATP = 3-O-(5'-adenylyl)-L-seryl-[protein] + diphosphate. The enzyme catalyses L-threonyl-[protein] + ATP = 3-O-(5'-adenylyl)-L-threonyl-[protein] + diphosphate. It carries out the reaction L-tyrosyl-[protein] + ATP = O-(5'-adenylyl)-L-tyrosyl-[protein] + diphosphate. The catalysed reaction is L-histidyl-[protein] + UTP = N(tele)-(5'-uridylyl)-L-histidyl-[protein] + diphosphate. It catalyses the reaction L-seryl-[protein] + UTP = O-(5'-uridylyl)-L-seryl-[protein] + diphosphate. The enzyme catalyses L-tyrosyl-[protein] + UTP = O-(5'-uridylyl)-L-tyrosyl-[protein] + diphosphate. Nucleotidyltransferase involved in the post-translational modification of proteins. It can catalyze the addition of adenosine monophosphate (AMP) or uridine monophosphate (UMP) to a protein, resulting in modifications known as AMPylation and UMPylation. The polypeptide is Protein nucleotidyltransferase YdiU (Teredinibacter turnerae (strain ATCC 39867 / T7901)).